The sequence spans 125 residues: uncharacterized protein (125 aa).

A helical transmembrane segment spans residues 96–113; the sequence is LFMMSIVSSYVCYITVLL.

The protein resides in the membrane. This is an uncharacterized protein from Saccharomyces cerevisiae (strain ATCC 204508 / S288c) (Baker's yeast).